Here is a 529-residue protein sequence, read N- to C-terminus: Peptide chain release factor 3 (529 aa).

The 269-residue stretch at 11–279 folds into the tr-type G domain; that stretch reads AKRRTFAIIS…GLVDWAPKPQ (269 aa). Residues 20-27, 88-92, and 142-145 contribute to the GTP site; these read SHPDAGKT, DTPGH, and NKLD.

It belongs to the TRAFAC class translation factor GTPase superfamily. Classic translation factor GTPase family. PrfC subfamily.

Its subcellular location is the cytoplasm. Its function is as follows. Increases the formation of ribosomal termination complexes and stimulates activities of RF-1 and RF-2. It binds guanine nucleotides and has strong preference for UGA stop codons. It may interact directly with the ribosome. The stimulation of RF-1 and RF-2 is significantly reduced by GTP and GDP, but not by GMP. In Idiomarina loihiensis (strain ATCC BAA-735 / DSM 15497 / L2-TR), this protein is Peptide chain release factor 3.